Here is a 118-residue protein sequence, read N- to C-terminus: Large ribosomal subunit protein bL20 (118 aa).

It belongs to the bacterial ribosomal protein bL20 family.

In terms of biological role, binds directly to 23S ribosomal RNA and is necessary for the in vitro assembly process of the 50S ribosomal subunit. It is not involved in the protein synthesizing functions of that subunit. In Francisella tularensis subsp. tularensis (strain WY96-3418), this protein is Large ribosomal subunit protein bL20.